An 808-amino-acid chain; its full sequence is Glutamate receptor 1.1 (808 aa).

Residues 1 to 19 (MEILFSISILALLFSGVVA) form the signal peptide. At 20–541 (APSDDDVFEE…MWTFFDPFEK (522 aa)) the chain is on the extracellular side. Residues Asn-288, Asn-339, and Asn-504 are each glycosylated (N-linked (GlcNAc...) asparagine). The chain crosses the membrane as a helical span at residues 542–562 (SLWLASGAFFVLTGIVVWLVE). The Cytoplasmic portion of the chain corresponds to 563-570 (RSVNPEFQ). A helical transmembrane segment spans residues 571 to 591 (GSWGQQLSMMLWFGFSTIVFA). Residues 592–602 (HREKLQKMSSR) lie on the Cytoplasmic side of the membrane. A helical transmembrane segment spans residues 603-623 (FLVIVWVFVVLILTSSYSANL). Residues 624–771 (TSTKTISRMQ…SKRFTFRELR (148 aa)) are Extracellular-facing. Residues 772 to 792 (GLFIIAGAAHVLVLALHLFHT) traverse the membrane as a helical segment. Topologically, residues 793–808 (RQEVSRLCTKLQSFYK) are cytoplasmic.

Belongs to the glutamate-gated ion channel (TC 1.A.10.1) family. May form heteromers. Expressed predominantly in roots. First detected in the root-shoot junction, and later in lateral roots and at the margin of matures leaves.

It is found in the membrane. In terms of biological role, glutamate-gated receptor that probably acts as a non-selective cation channel. Can transport sodium, potassium, and calcium ions. Functions as a carbon and nitrogen regulator and/or sensor that regulates carbon and nitrogen metabolism and distinct physiological process such as germination through the control of acid abscisic (ABA) biosynthesis. May be involved in light-signal transduction and calcium homeostasis via the regulation of calcium influx into cells. Seems required for the regulation of the abscisic acid (ABA) signaling pathway that modulates many aspects of plant physiology such as seed germination and response to drought (e.g. stomata opening). The polypeptide is Glutamate receptor 1.1 (GLR1.1) (Arabidopsis thaliana (Mouse-ear cress)).